The primary structure comprises 267 residues: 5'-nucleotidase SurE (267 aa).

Residues aspartate 14, aspartate 15, serine 45, and asparagine 100 each contribute to the a divalent metal cation site.

It belongs to the SurE nucleotidase family. Requires a divalent metal cation as cofactor.

It localises to the cytoplasm. The catalysed reaction is a ribonucleoside 5'-phosphate + H2O = a ribonucleoside + phosphate. Functionally, nucleotidase that shows phosphatase activity on nucleoside 5'-monophosphates. This Methanosarcina acetivorans (strain ATCC 35395 / DSM 2834 / JCM 12185 / C2A) protein is 5'-nucleotidase SurE.